Reading from the N-terminus, the 220-residue chain is Dual specificity phosphatase 29 (220 aa).

Polar residues predominate over residues 1–15 (MTSGEVKTSLKNAYS). Residues 1–29 (MTSGEVKTSLKNAYSSAKRLSPKMEEEGE) form a disordered region. Residues 54-202 (HVNEVWPKLY…LRELDKQLVQ (149 aa)) enclose the Tyrosine-protein phosphatase domain. 146–153 (HCVMGRSR) provides a ligand contact to substrate. Cys147 acts as the Phosphocysteine intermediate in catalysis.

This sequence belongs to the protein-tyrosine phosphatase family. Non-receptor class dual specificity subfamily. Homodimer. Interacts with PRKAA2.

Its subcellular location is the cytoplasm. It localises to the nucleus. The enzyme catalyses O-phospho-L-tyrosyl-[protein] + H2O = L-tyrosyl-[protein] + phosphate. It carries out the reaction O-phospho-L-seryl-[protein] + H2O = L-seryl-[protein] + phosphate. It catalyses the reaction O-phospho-L-threonyl-[protein] + H2O = L-threonyl-[protein] + phosphate. Its function is as follows. Dual specificity phosphatase able to dephosphorylate phosphotyrosine, phosphoserine and phosphothreonine residues within the same substrate, with a preference for phosphotyrosine as a substrate. Involved in the modulation of intracellular signaling cascades. In skeletal muscle regulates systemic glucose homeostasis by activating, AMPK, an energy sensor protein kinase. Affects MAP kinase signaling though modulation of the MAPK1/2 cascade in skeletal muscle promoting muscle cell differentiation, development and atrophy. The protein is Dual specificity phosphatase 29 of Homo sapiens (Human).